The following is a 413-amino-acid chain: Serine hydroxymethyltransferase (413 aa).

(6S)-5,6,7,8-tetrahydrofolate contacts are provided by residues L120 and 124–126 (GHL). At K228 the chain carries N6-(pyridoxal phosphate)lysine.

The protein belongs to the SHMT family. As to quaternary structure, homodimer. Pyridoxal 5'-phosphate serves as cofactor.

It localises to the cytoplasm. The enzyme catalyses (6R)-5,10-methylene-5,6,7,8-tetrahydrofolate + glycine + H2O = (6S)-5,6,7,8-tetrahydrofolate + L-serine. It participates in one-carbon metabolism; tetrahydrofolate interconversion. It functions in the pathway amino-acid biosynthesis; glycine biosynthesis; glycine from L-serine: step 1/1. Its function is as follows. Catalyzes the reversible interconversion of serine and glycine with tetrahydrofolate (THF) serving as the one-carbon carrier. This reaction serves as the major source of one-carbon groups required for the biosynthesis of purines, thymidylate, methionine, and other important biomolecules. Also exhibits THF-independent aldolase activity toward beta-hydroxyamino acids, producing glycine and aldehydes, via a retro-aldol mechanism. The polypeptide is Serine hydroxymethyltransferase (Agathobacter rectalis (strain ATCC 33656 / DSM 3377 / JCM 17463 / KCTC 5835 / VPI 0990) (Eubacterium rectale)).